Reading from the N-terminus, the 205-residue chain is Probable GTP-binding protein EngB (205 aa).

Residues 22–195 (NLPEVALVGR…LDLLDYFWNG (174 aa)) form the EngB-type G domain. GTP contacts are provided by residues 30–37 (GRSNVGKS), 57–61 (GKTQT), 75–78 (DLPG), 142–145 (TKAD), and 174–176 (FSA). The Mg(2+) site is built by S37 and T59.

It belongs to the TRAFAC class TrmE-Era-EngA-EngB-Septin-like GTPase superfamily. EngB GTPase family. The cofactor is Mg(2+).

Functionally, necessary for normal cell division and for the maintenance of normal septation. This chain is Probable GTP-binding protein EngB, found in Heliobacterium modesticaldum (strain ATCC 51547 / Ice1).